Here is a 723-residue protein sequence, read N- to C-terminus: Nucleolar protein 11 (723 aa).

Lysine 346 carries the post-translational modification N6-methyllysine. The segment at 549 to 572 (FGPEDGNCSEDSQQLNDKPADTAH) is disordered.

Interacts with UTP4. Interacts with FBL/fibrillarin in a transcription-dependent manner. May associate with the proposed t-UTP subcomplex of the SSU processome containing at least UTP4, WDR43, HEATR1, UTP15, WDR75.

It is found in the nucleus. It localises to the nucleolus. Ribosome biogenesis factor. May be required for both optimal rDNA transcription and small subunit (SSU) pre-rRNA processing at sites A', A0, 1 and 2b. The sequence is that of Nucleolar protein 11 (Nol11) from Mus musculus (Mouse).